A 1004-amino-acid chain; its full sequence is 2-oxoglutarate dehydrogenase E1 component (1004 aa).

Belongs to the alpha-ketoglutarate dehydrogenase family. In terms of assembly, homodimer. Part of the 2-oxoglutarate dehydrogenase (OGDH) complex composed of E1 (2-oxoglutarate dehydrogenase), E2 (dihydrolipoamide succinyltransferase) and E3 (dihydrolipoamide dehydrogenase); the complex contains multiple copies of the three enzymatic components (E1, E2 and E3). Requires thiamine diphosphate as cofactor.

It carries out the reaction N(6)-[(R)-lipoyl]-L-lysyl-[protein] + 2-oxoglutarate + H(+) = N(6)-[(R)-S(8)-succinyldihydrolipoyl]-L-lysyl-[protein] + CO2. Its function is as follows. E1 component of the 2-oxoglutarate dehydrogenase (OGDH) complex which catalyzes the decarboxylation of 2-oxoglutarate, the first step in the conversion of 2-oxoglutarate to succinyl-CoA and CO(2). This Brucella suis (strain ATCC 23445 / NCTC 10510) protein is 2-oxoglutarate dehydrogenase E1 component.